A 71-amino-acid chain; its full sequence is Beta-defensin 9 (71 aa).

Positions Met1–Gly23 are cleaved as a signal peptide. Cystine bridges form between Cys37/Cys66, Cys44/Cys59, and Cys49/Cys67.

Belongs to the beta-defensin family.

The protein resides in the secreted. Has antibacterial activity. This is Beta-defensin 9 (Defb9) from Rattus norvegicus (Rat).